The sequence spans 88 residues: MKTLLLTLVVVTIVCLDLGNSFSCYKTPYVKSEPCAPGENLCYTKSWCDRFCSIRGKVIELGCAATCPPAEPKKDITCCSTDNCNTHP.

A signal peptide spans 1 to 21; it reads MKTLLLTLVVVTIVCLDLGNS. Cystine bridges form between Cys-24/Cys-42, Cys-35/Cys-63, Cys-48/Cys-52, Cys-67/Cys-78, and Cys-79/Cys-84.

The protein belongs to the three-finger toxin family. Long-chain subfamily. Type II alpha-neurotoxin sub-subfamily. Expressed by the venom gland.

Its subcellular location is the secreted. In terms of biological role, binds with high affinity to muscular (alpha-1/CHRNA1) and neuronal (alpha-7/CHRNA7) nicotinic acetylcholine receptor (nAChR) and inhibits acetylcholine from binding to the receptor, thereby impairing neuromuscular and neuronal transmission. This chain is Long neurotoxin 20, found in Drysdalia coronoides (White-lipped snake).